We begin with the raw amino-acid sequence, 385 residues long: 3-hydroxyisobutyryl-CoA hydrolase, mitochondrial (385 aa).

The N-terminal 32 residues, 1-32 (MGQPYAWRLLSRVSSFRRASVILQHLRMSMHT), are a transit peptide targeting the mitochondrion. N6-acetyllysine; alternate is present on residues Lys-54, Lys-91, and Lys-100. An N6-succinyllysine; alternate mark is found at Lys-54, Lys-91, and Lys-100. Residues Glu-120, Gly-145, Glu-168, and Asp-176 each contribute to the substrate site. Lys-220 carries the post-translational modification N6-acetyllysine; alternate. Lys-220 is subject to N6-succinyllysine; alternate. Ser-233 bears the Phosphoserine mark. Residues Lys-249 and Lys-256 each carry the N6-succinyllysine modification. Lys-296 carries the N6-acetyllysine; alternate modification. Lys-296 is subject to N6-succinyllysine; alternate. An N6-succinyllysine modification is found at Lys-300. Lys-352 carries the post-translational modification N6-acetyllysine; alternate. An N6-succinyllysine; alternate modification is found at Lys-352. N6-acetyllysine occurs at positions 359 and 364. Lys-376 is modified (N6-succinyllysine).

It belongs to the enoyl-CoA hydratase/isomerase family.

The protein resides in the mitochondrion. It carries out the reaction 3-hydroxy-2-methylpropanoyl-CoA + H2O = 3-hydroxy-2-methylpropanoate + CoA + H(+). The protein operates within amino-acid degradation; L-valine degradation. Its function is as follows. Hydrolyzes 3-hydroxyisobutyryl-CoA (HIBYL-CoA), a saline catabolite. Has high activity toward isobutyryl-CoA. Could be an isobutyryl-CoA dehydrogenase that functions in valine catabolism. Also hydrolyzes 3-hydroxypropanoyl-CoA. The sequence is that of 3-hydroxyisobutyryl-CoA hydrolase, mitochondrial (Hibch) from Mus musculus (Mouse).